We begin with the raw amino-acid sequence, 143 residues long: Putative phosphotransferase IIA component SgcA (143 aa).

One can recognise a PTS EIIA type-2 domain in the interval Met1–Gly143. His63 functions as the Tele-phosphohistidine intermediate in the catalytic mechanism.

It is found in the cytoplasm. The phosphoenolpyruvate-dependent sugar phosphotransferase system (sugar PTS), a major carbohydrate active -transport system, catalyzes the phosphorylation of incoming sugar substrates concomitantly with their translocation across the cell membrane. The chain is Putative phosphotransferase IIA component SgcA (sgcA) from Escherichia coli (strain K12).